The primary structure comprises 266 residues: Glutamate racemase (266 aa).

Substrate contacts are provided by residues 7-8 (DS) and 39-40 (YG). C70 acts as the Proton donor/acceptor in catalysis. Residue 71–72 (NT) coordinates substrate. C186 acts as the Proton donor/acceptor in catalysis. Position 187-188 (187-188 (TH)) interacts with substrate.

It belongs to the aspartate/glutamate racemases family.

The catalysed reaction is L-glutamate = D-glutamate. The protein operates within cell wall biogenesis; peptidoglycan biosynthesis. Its function is as follows. Provides the (R)-glutamate required for cell wall biosynthesis. The chain is Glutamate racemase from Campylobacter curvus (strain 525.92).